Consider the following 463-residue polypeptide: tRNA-2-methylthio-N(6)-dimethylallyladenosine synthase (463 aa).

An MTTase N-terminal domain is found at 18–136 (RKLYIETYGC…LPNLVGAAEQ (119 aa)). Residues cysteine 27, cysteine 63, cysteine 100, cysteine 174, cysteine 178, and cysteine 181 each coordinate [4Fe-4S] cluster. The region spanning 160–392 (GGVHINGFVS…IALQNRLSEE (233 aa)) is the Radical SAM core domain. Positions 395 to 458 (KRDIGKTFEV…SATLFGEVVE (64 aa)) constitute a TRAM domain.

It belongs to the methylthiotransferase family. MiaB subfamily. As to quaternary structure, monomer. The cofactor is [4Fe-4S] cluster.

It localises to the cytoplasm. The catalysed reaction is N(6)-dimethylallyladenosine(37) in tRNA + (sulfur carrier)-SH + AH2 + 2 S-adenosyl-L-methionine = 2-methylsulfanyl-N(6)-dimethylallyladenosine(37) in tRNA + (sulfur carrier)-H + 5'-deoxyadenosine + L-methionine + A + S-adenosyl-L-homocysteine + 2 H(+). Functionally, catalyzes the methylthiolation of N6-(dimethylallyl)adenosine (i(6)A), leading to the formation of 2-methylthio-N6-(dimethylallyl)adenosine (ms(2)i(6)A) at position 37 in tRNAs that read codons beginning with uridine. The polypeptide is tRNA-2-methylthio-N(6)-dimethylallyladenosine synthase (Porphyromonas gingivalis (strain ATCC BAA-308 / W83)).